The sequence spans 253 residues: U2 small nuclear ribonucleoprotein A' (253 aa).

LRR repeat units lie at residues K19 to K40, D41 to P62, R63 to T84, and N87 to R108. Positions N121–L159 constitute an LRRCT domain. A disordered region spans residues E228 to T253. A compositionally biased stretch (acidic residues) spans A241 to T253.

It belongs to the U2 small nuclear ribonucleoprotein A family. In terms of assembly, associated with the spliceosome.

Its subcellular location is the nucleus. In terms of biological role, involved in pre-mRNA splicing. The protein is U2 small nuclear ribonucleoprotein A' (lea1) of Aspergillus fumigatus (strain ATCC MYA-4609 / CBS 101355 / FGSC A1100 / Af293) (Neosartorya fumigata).